The chain runs to 97 residues: Large ribosomal subunit protein uL23 (97 aa).

The protein belongs to the universal ribosomal protein uL23 family. In terms of assembly, part of the 50S ribosomal subunit. Contacts protein L29, and trigger factor when it is bound to the ribosome.

One of the early assembly proteins it binds 23S rRNA. One of the proteins that surrounds the polypeptide exit tunnel on the outside of the ribosome. Forms the main docking site for trigger factor binding to the ribosome. The protein is Large ribosomal subunit protein uL23 of Brucella canis (strain ATCC 23365 / NCTC 10854 / RM-666).